A 320-amino-acid chain; its full sequence is Cytochrome f (320 aa).

The first 35 residues, 1–35, serve as a signal peptide directing secretion; it reads MQTRNAFSCIKEGITRSISISVMIYIIIRAPFSNA. 4 residues coordinate heme: Tyr36, Cys56, Cys59, and His60. The helical transmembrane segment at 286–306 threads the bilayer; the sequence is VQGLLFFLASIILAQIFLVLK.

The protein belongs to the cytochrome f family. As to quaternary structure, the 4 large subunits of the cytochrome b6-f complex are cytochrome b6, subunit IV (17 kDa polypeptide, petD), cytochrome f and the Rieske protein, while the 4 small subunits are PetG, PetL, PetM and PetN. The complex functions as a dimer. The cofactor is heme.

The protein localises to the plastid. Its subcellular location is the chloroplast thylakoid membrane. Component of the cytochrome b6-f complex, which mediates electron transfer between photosystem II (PSII) and photosystem I (PSI), cyclic electron flow around PSI, and state transitions. The polypeptide is Cytochrome f (Phaseolus vulgaris (Kidney bean)).